The chain runs to 358 residues: MTLPNDLLETLVKRKESPQANKVWPVTTFSLARNLSVSKFLPCLSKEQKLEILQFITSHFNHIEGFGEFIVLPLKDTPLWQKEFLLEHFLLPYDLVGNPEGEALVVSRSGDFLAAINFQDHLVLHGIDFQGNVEKTLDQLVQLDSYLHSKLSFAFSSEFGFLTTNPKNCGTGLKSQCFLHIPALLYSKEFTNLIDEEVEIITSSLLLGVTGFPGNIVVLSNRCSLGLTEELLLSSLRITASKLSVAEVAAKKRLSEENSGDLKNLILRSLGLLTHSCQLELKETLDALSWIQLGIDLGLIKVTENHPLWNPLFWQIRRAHLALQKQAEDSRDLQKDTISHLRASVLKELTKGLSPESF.

A Phosphagen kinase C-terminal domain is found at 23–250 (VWPVTTFSLA…SKLSVAEVAA (228 aa)). ATP is bound by residues 26-30 (VTTFS), 174-178 (KSQCF), and 203-208 (SSLLLG).

This sequence belongs to the ATP:guanido phosphotransferase family.

The catalysed reaction is L-arginyl-[protein] + ATP = N(omega)-phospho-L-arginyl-[protein] + ADP + H(+). Catalyzes the specific phosphorylation of arginine residues in proteins. The chain is Protein-arginine kinase from Chlamydia pneumoniae (Chlamydophila pneumoniae).